A 327-amino-acid polypeptide reads, in one-letter code: Opticin (327 aa).

An N-terminal signal peptide occupies residues 1-19 (MKLPAFLSLLALVLLEAGT). A sulfotyrosine mark is found at Tyr61 and Tyr67. Residues 111–148 (VLGSPNSHGLPTCLICVCLGSSVYCDDADLENIPPLPK) enclose the LRRNT domain. LRR repeat units lie at residues 149–170 (TTTY…DFKG), 173–194 (KLKR…ALRL), 197–218 (ALQD…PPAI), 219–237 (EVLD…QPEA), 243–263 (KLQF…PLPP), 264–285 (SLRS…AFCD), and 295–315 (WLED…PSAY). Cys284 and Cys317 are joined by a disulfide.

It belongs to the small leucine-rich proteoglycan (SLRP) family. SLRP class III subfamily. Homodimer. O-glycosylated. Post-translationally, proteolytically cleaved by MMP1, MMP2, MMP3, MMP7, MMP8, MMP9, ADAMTS4, and ADAMTS5. Proteolytically cleaved by MMP13. In terms of processing, sulfated on tyrosine residues. As to expression, ocular tissues, cartilage, ligament, skin, muscle and testes.

The protein resides in the secreted. It localises to the extracellular space. The protein localises to the extracellular matrix. Inhibits angiogenesis in the vitreous humor of the eye, and therefore represses neovascularization. Binds collagen fibrils. May be involved in collagen fiber organization via regulation of other members of the small leucine-rich repeat proteoglycan superfamily. This is Opticin (OPTC) from Canis lupus familiaris (Dog).